Here is a 435-residue protein sequence, read N- to C-terminus: Methylenetetrahydrofolate--tRNA-(uracil-5-)-methyltransferase TrmFO (435 aa).

FAD is bound at residue 9 to 14; the sequence is GAGLAG.

This sequence belongs to the MnmG family. TrmFO subfamily. FAD is required as a cofactor.

Its subcellular location is the cytoplasm. The catalysed reaction is uridine(54) in tRNA + (6R)-5,10-methylene-5,6,7,8-tetrahydrofolate + NADH + H(+) = 5-methyluridine(54) in tRNA + (6S)-5,6,7,8-tetrahydrofolate + NAD(+). The enzyme catalyses uridine(54) in tRNA + (6R)-5,10-methylene-5,6,7,8-tetrahydrofolate + NADPH + H(+) = 5-methyluridine(54) in tRNA + (6S)-5,6,7,8-tetrahydrofolate + NADP(+). Catalyzes the folate-dependent formation of 5-methyl-uridine at position 54 (M-5-U54) in all tRNAs. In Staphylococcus haemolyticus (strain JCSC1435), this protein is Methylenetetrahydrofolate--tRNA-(uracil-5-)-methyltransferase TrmFO.